We begin with the raw amino-acid sequence, 504 residues long: Cytochrome P450 3A41 (504 aa).

Residue Cys-443 coordinates heme.

This sequence belongs to the cytochrome P450 family. The cofactor is heme. As to expression, expressed in liver. Also expressed in the kidneys of female mice, with traces in the stomach, ovary, and heart of female mice and in the testis of male mice.

The protein localises to the endoplasmic reticulum membrane. The protein resides in the microsome membrane. It catalyses the reaction an organic molecule + reduced [NADPH--hemoprotein reductase] + O2 = an alcohol + oxidized [NADPH--hemoprotein reductase] + H2O + H(+). In Mus musculus (Mouse), this protein is Cytochrome P450 3A41 (Cyp3a41a).